Here is a 701-residue protein sequence, read N- to C-terminus: Potassium-transporting ATPase ATP-binding subunit (701 aa).

The tract at residues 1–28 (MNPDAPTPKNKSSRSRPSDRPQARKKAK) is disordered. 4 helical membrane-spanning segments follow: residues 57–77 (MFLV…PNLF), 90–110 (GILT…EAVA), 245–265 (VLLA…PVFA), and 276–296 (ILVA…LSAI). Asp329 (4-aspartylphosphate intermediate) is an active-site residue. ATP is bound by residues Asp366, Glu370, 397 to 404 (FSAKTRMS), and Lys416. Asp539 and Asp543 together coordinate Mg(2+). The next 3 membrane-spanning stretches (helical) occupy residues 599–619 (FSLA…FASA), 635–655 (AVLS…PLAL), and 681–701 (VIAP…VGLA).

This sequence belongs to the cation transport ATPase (P-type) (TC 3.A.3) family. Type IA subfamily. As to quaternary structure, the system is composed of three essential subunits: KdpA, KdpB and KdpC.

The protein localises to the cell membrane. The enzyme catalyses K(+)(out) + ATP + H2O = K(+)(in) + ADP + phosphate + H(+). In terms of biological role, part of the high-affinity ATP-driven potassium transport (or Kdp) system, which catalyzes the hydrolysis of ATP coupled with the electrogenic transport of potassium into the cytoplasm. This subunit is responsible for energy coupling to the transport system and for the release of the potassium ions to the cytoplasm. This is Potassium-transporting ATPase ATP-binding subunit from Anabaena sp. (strain L31).